The chain runs to 252 residues: 14-3-3 protein 7 (252 aa).

It belongs to the 14-3-3 family. As to quaternary structure, homodimer.

The chain is 14-3-3 protein 7 (TFT7) from Solanum lycopersicum (Tomato).